Reading from the N-terminus, the 264-residue chain is Undecaprenyl-diphosphatase (264 aa).

A run of 8 helical transmembrane segments spans residues Met1 to Ile21, Gly40 to Trp60, Met81 to Glu101, Thr109 to Ala129, Ile140 to Val160, Phe183 to Ile203, Ala211 to Leu231, and Phe239 to Ala259.

Belongs to the UppP family.

Its subcellular location is the cell membrane. The catalysed reaction is di-trans,octa-cis-undecaprenyl diphosphate + H2O = di-trans,octa-cis-undecaprenyl phosphate + phosphate + H(+). Its function is as follows. Catalyzes the dephosphorylation of undecaprenyl diphosphate (UPP). Confers resistance to bacitracin. The polypeptide is Undecaprenyl-diphosphatase (Pelotomaculum thermopropionicum (strain DSM 13744 / JCM 10971 / SI)).